The following is a 462-amino-acid chain: MSEINNENLEPTSSTVAESTESKNKHIRSALRKRRGKLSAQTYEEDQEAILSSPLLTSTPKTVSRSLVRLYPYLIVVDNFLSIITWSNDNVSANLLGIFLFTVCVLYFGFITRYFGHLMIVGIIWVYLLIDKHVQETMASCPSLDDIIHVMDRVSMKSSAVLSPITILSAQDVRRLLFTIAFLSPVYIFLTVFVLSPNYLMLIGGLYVLTYHSKLIRRMRRYLWKFRVVRLLVFFITGLDLGGPDNNRRLFASVNKKIRSFVWNEVGNTSNTKKTVLFKVALFENQRRWLGIGWTSTMLSYERASWTDEFLNTSPSPEVFTLPEEQSGMAWEWHDKDWMLDLTNDGIIQLPASAAKTKVKPGADEGFIYYDNTWNNPSATDTYKKYTRRRRWIRTATVTTTYDDEPTVEKATPNSHALKSEENNRVRKRKVSFSTANEVHIIPSSDSSKLIQISDVSMSPSL.

Residues 1–19 (MSEINNENLEPTSSTVAES) are compositionally biased toward polar residues. Residues 1–26 (MSEINNENLEPTSSTVAESTESKNKH) are disordered. The Cytoplasmic portion of the chain corresponds to 1-90 (MSEINNENLE…LSIITWSNDN (90 aa)). The chain crosses the membrane as a helical span at residues 91-111 (VSANLLGIFLFTVCVLYFGFI). Over 112–175 (TRYFGHLMIV…TILSAQDVRR (64 aa)) the chain is Peroxisomal. The helical transmembrane segment at 176-196 (LLFTIAFLSPVYIFLTVFVLS) threads the bilayer. Residues 197–462 (PNYLMLIGGL…ISDVSMSPSL (266 aa)) are Cytoplasmic-facing. Positions 406-425 (PTVEKATPNSHALKSEENNR) are disordered. A Phosphoserine modification is found at S432. Residue T435 is modified to Phosphothreonine.

It belongs to the PEX28-32 family. PEX30/31 subfamily.

It localises to the peroxisome membrane. This Saccharomyces cerevisiae (strain ATCC 204508 / S288c) (Baker's yeast) protein is Peroxisomal membrane protein PEX31 (PEX31).